We begin with the raw amino-acid sequence, 334 residues long: Geranylgeranyl pyrophosphate synthase ltmG (334 aa).

Residues K53, R56, and H85 each coordinate isopentenyl diphosphate. Mg(2+)-binding residues include D92 and D96. R101 provides a ligand contact to dimethylallyl diphosphate. An isopentenyl diphosphate-binding site is contributed by R102. Residues K179, T180, and Q213 each contribute to the dimethylallyl diphosphate site. D216 lines the Mg(2+) pocket. Residues N220, K230, and K240 each coordinate dimethylallyl diphosphate.

It belongs to the FPP/GGPP synthase family. Requires Mg(2+) as cofactor.

The enzyme catalyses isopentenyl diphosphate + dimethylallyl diphosphate = (2E)-geranyl diphosphate + diphosphate. It carries out the reaction isopentenyl diphosphate + (2E)-geranyl diphosphate = (2E,6E)-farnesyl diphosphate + diphosphate. It catalyses the reaction isopentenyl diphosphate + (2E,6E)-farnesyl diphosphate = (2E,6E,10E)-geranylgeranyl diphosphate + diphosphate. Its pathway is secondary metabolite biosynthesis. Functionally, geranylgeranyl pyrophosphate synthase; part of the gene cluster that mediates the biosynthesis of lolitrems, indole-diterpene mycotoxins that are potent tremorgens in mammals, and are synthesized by clavicipitaceous fungal endophytes in association with their grass hosts. The geranylgeranyl diphosphate (GGPP) synthase ltmG is proposed to catalyze the first step in lolitrem biosynthesis. LtmG catalyzes a series of iterative condensations of isopentenyl diphosphate (IPP) with dimethylallyl diphosphate (DMAPP), geranyl diphosphate (GPP), and farnesyl diphosphate (FPP), to form GGPP. GGPP then condenses with indole-3-glycerol phosphate to form 3-geranylgeranylindole, an acyclic intermediate, to be incorporated into paxilline. Either ltmG or ltmC could be responsible for this step, as both are putative prenyl transferases. The FAD-dependent monooxygenase ltmM then catalyzes the epoxidation of the two terminal alkenes of the geranylgeranyl moiety, which is subsequently cyclized by ltmB, to paspaline. The cytochrome P450 monooxygenases ltmQ and ltmP can sequentially oxidize paspaline to terpendole E and terpendole F. Alternatively, ltmP converts paspaline to an intermediate which is oxidized by ltmQ to terpendole F. LtmF, ltmK, ltmE and ltmJ appear to be unique to the epichloe endophytes. The prenyltransferase ltmF is involved in the 27-hydroxyl-O-prenylation. The cytochrome P450 monooxygenase ltmK is required for the oxidative acetal ring formation. The multi-functional prenyltransferase ltmE is required for C20- and C21-prenylations of the indole ring of paspalanes and acts together with the cytochrome P450 monooxygenase ltmJ to yield lolitremanes by multiple oxidations and ring closures. The stereoisomer pairs of lolitriol and lolitrem N or lolitrem B and lolitrem F may be attributed to variations in the way in which ring closure can occur under the action of ltmJ. While the major product of this pathway is lolitrem B, the prenyl transferases and cytochrome P450 monooxygenases identified in this pathway have a remarkable versatility in their regio- and stereo-specificities to generate a diverse range of metabolites that are products of a metabolic grid rather than a linear pathway. The protein is Geranylgeranyl pyrophosphate synthase ltmG of Epichloe festucae (strain Fl1).